Here is a 372-residue protein sequence, read N- to C-terminus: N-methyl-L-tryptophan oxidase (372 aa).

4-34 (DLIIIGSGSVGAAAGYYATRAGLKVLMTDAH) is a binding site for FAD. Cys307 is modified (S-8alpha-FAD cysteine).

Belongs to the MSOX/MTOX family. MTOX subfamily. In terms of assembly, monomer. The cofactor is FAD.

It carries out the reaction N(alpha)-methyl-L-tryptophan + O2 + H2O = L-tryptophan + formaldehyde + H2O2. Catalyzes the oxidative demethylation of N-methyl-L-tryptophan. This is N-methyl-L-tryptophan oxidase from Salmonella dublin (strain CT_02021853).